The following is a 405-amino-acid chain: Homocitrate synthase AksA (405 aa).

Residues Ile-23 to Thr-274 enclose the Pyruvate carboxyltransferase domain.

Belongs to the alpha-IPM synthase/homocitrate synthase family.

It catalyses the reaction acetyl-CoA + 2-oxoglutarate + H2O = (2R)-homocitrate + CoA + H(+). It carries out the reaction 2-oxoadipate + acetyl-CoA + H2O = (R)-dihomocitrate + CoA + H(+). The catalysed reaction is 2-oxoheptanedioate + acetyl-CoA + H2O = (R)-trihomocitrate + CoA + H(+). It participates in organic acid metabolism; 2-oxosuberate biosynthesis. Catalyzes the condensation of alpha-ketoglutarate and acetyl-CoA to form (R)-homocitrate. Can also catalyze the condensation of alpha-ketoadipate with acetyl-CoA to form (R)-homo(2)citrate, and the condensation of alpha-ketopimelate with acetyl-CoA to form (R)-homo(3)citrate. These reactions are part of the biosynthesis pathway of coenzyme B and biotin. This Methanosarcina acetivorans (strain ATCC 35395 / DSM 2834 / JCM 12185 / C2A) protein is Homocitrate synthase AksA (aksA).